Reading from the N-terminus, the 121-residue chain is Autophagy-related protein 8 (121 aa).

Gly116 carries the Phosphatidylethanolamine amidated glycine lipid modification. A propeptide spans 117–121 (DFETA) (removed in mature form).

It belongs to the ATG8 family. Post-translationally, the C-terminal 5 residues are removed to expose Gly-116 at the C-terminus. The C-terminal Gly is then amidated with phosphatidylethanolamine by an activating system similar to that for ubiquitin.

The protein localises to the cytoplasmic vesicle. Its subcellular location is the autophagosome membrane. It localises to the vacuole membrane. Ubiquitin-like modifier involved in autophagosome formation. With cpr-1/atg4, mediates the delivery of the autophagosomes to the vacuole via the microtubule cytoskeleton. Required for selective autophagic degradation of the nucleus (nucleophagy) as well as for mitophagy which contributes to regulate mitochondrial quantity and quality by eliminating the mitochondria to a basal level to fulfill cellular energy requirements and preventing excess ROS production. Also participates in membrane fusion events that take place in the early secretory pathway. Also involved in endoplasmic reticulum-specific autophagic process and is essential for the survival of cells subjected to severe ER stress. The apg-6/atg8-PE conjugate mediates tethering between adjacent membranes and stimulates membrane hemifusion, leading to expansion of the autophagosomal membrane during autophagy. The chain is Autophagy-related protein 8 (apg-6) from Neurospora crassa (strain ATCC 24698 / 74-OR23-1A / CBS 708.71 / DSM 1257 / FGSC 987).